The sequence spans 189 residues: Protein GrpE (189 aa).

The segment covering 1-13 has biased composition (polar residues); sequence MSENKQPEQNQDL. The disordered stretch occupies residues 1-35; sequence MSENKQPEQNQDLTGEPSPEELEAAQAADEFDAMN.

It belongs to the GrpE family. As to quaternary structure, homodimer.

The protein localises to the cytoplasm. Functionally, participates actively in the response to hyperosmotic and heat shock by preventing the aggregation of stress-denatured proteins, in association with DnaK and GrpE. It is the nucleotide exchange factor for DnaK and may function as a thermosensor. Unfolded proteins bind initially to DnaJ; upon interaction with the DnaJ-bound protein, DnaK hydrolyzes its bound ATP, resulting in the formation of a stable complex. GrpE releases ADP from DnaK; ATP binding to DnaK triggers the release of the substrate protein, thus completing the reaction cycle. Several rounds of ATP-dependent interactions between DnaJ, DnaK and GrpE are required for fully efficient folding. The chain is Protein GrpE from Polaromonas naphthalenivorans (strain CJ2).